A 276-amino-acid polypeptide reads, in one-letter code: MESISWNTPSVRDALAAVKRDAPFIYGLTNYVAANLSANVLLAVGAAPAIGAAADWPARFGAGANALWINTAALMSSGADTLLTAARAASKAGTRWVLDPVALGAGAPEYDAIVRDLLALRPTVIRGNASELIALAGGTAAGKGVDTTASPESALAFIGDLARRSGAVVSVSGPTDYVTDGVATLAVAGGDARLTRVTGAGCALGALIAALLAQRGAALAAASAAHAIYATAAERAADARGTASFAVRFVDELSLLDPAESSRDRSAGQIGAKRRE.

ATP contacts are provided by R126 and S172. G199 serves as a coordination point for substrate.

It belongs to the Thz kinase family. The cofactor is Mg(2+).

The catalysed reaction is 5-(2-hydroxyethyl)-4-methylthiazole + ATP = 4-methyl-5-(2-phosphooxyethyl)-thiazole + ADP + H(+). The protein operates within cofactor biosynthesis; thiamine diphosphate biosynthesis; 4-methyl-5-(2-phosphoethyl)-thiazole from 5-(2-hydroxyethyl)-4-methylthiazole: step 1/1. Its function is as follows. Catalyzes the phosphorylation of the hydroxyl group of 4-methyl-5-beta-hydroxyethylthiazole (THZ). In Burkholderia pseudomallei (strain 1710b), this protein is Hydroxyethylthiazole kinase.